The chain runs to 463 residues: Glycine--tRNA ligase (463 aa).

Substrate-binding residues include arginine 98 and glutamate 170. ATP-binding positions include 202-204 (RNE), 212-217 (FRTREF), 287-288 (EL), and 331-334 (GIER). 217-221 (FEQFE) provides a ligand contact to substrate. 327 to 331 (EPSLG) contributes to the substrate binding site.

This sequence belongs to the class-II aminoacyl-tRNA synthetase family. Homodimer.

Its subcellular location is the cytoplasm. It carries out the reaction tRNA(Gly) + glycine + ATP = glycyl-tRNA(Gly) + AMP + diphosphate. In terms of biological role, catalyzes the attachment of glycine to tRNA(Gly). This chain is Glycine--tRNA ligase, found in Mycoplasmoides gallisepticum (strain R(low / passage 15 / clone 2)) (Mycoplasma gallisepticum).